The sequence spans 104 residues: Small ribosomal subunit protein uS10 (104 aa).

This sequence belongs to the universal ribosomal protein uS10 family. In terms of assembly, part of the 30S ribosomal subunit.

Involved in the binding of tRNA to the ribosomes. The chain is Small ribosomal subunit protein uS10 from Ruegeria pomeroyi (strain ATCC 700808 / DSM 15171 / DSS-3) (Silicibacter pomeroyi).